Reading from the N-terminus, the 511-residue chain is Probable Xaa-Pro aminopeptidase MAA_08947 (511 aa).

Residues aspartate 275, aspartate 286, glutamate 439, and glutamate 480 each contribute to the Mn(2+) site.

This sequence belongs to the peptidase M24B family. Mn(2+) serves as cofactor.

The catalysed reaction is Release of any N-terminal amino acid, including proline, that is linked to proline, even from a dipeptide or tripeptide.. Functionally, catalyzes the removal of a penultimate prolyl residue from the N-termini of peptides. The polypeptide is Probable Xaa-Pro aminopeptidase MAA_08947 (Metarhizium robertsii (strain ARSEF 23 / ATCC MYA-3075) (Metarhizium anisopliae (strain ARSEF 23))).